Reading from the N-terminus, the 435-residue chain is Protein lin-54 (435 aa).

The tract at residues 73–136 (DEPIDTSSHR…PASLPRTVQP (64 aa)) is disordered. The segment covering 102 to 120 (TPGSSQYTVRNLSNLSGSP) has biased composition (polar residues). A CRC domain is found at 173 to 288 (QRKPCNCTKS…KCKGCQNTET (116 aa)). The DNA-binding stretch occupies residues 175–188 (KPCNCTKSQCLKLY). Residues Cys177, Cys179, Cys184, Cys189, Cys191, Cys198, Cys201, Cys203, and Cys206 each contribute to the Zn(2+) site. The tract at residues 235 to 250 (IGIARGGITDIERLHQ) is linker. 9 residues coordinate Zn(2+): Cys253, Cys255, Cys260, Cys265, Cys267, Cys274, Cys278, Cys280, and Cys283. The tract at residues 253–266 (CHCKKSGCLKNYCE) is DNA-binding. The tract at residues 415-435 (LTQDLDAAPTDDIPGPSTSTS) is disordered.

It belongs to the lin-54 family. In terms of assembly, component of the DRM complex, at least composed of lin-9, lin-35, lin-37, lin-52, lin-53, lin-54- dpl-1 and efl-1.

It is found in the nucleus. It localises to the chromosome. In terms of biological role, synthetic multivulva class B (synMuvB) protein. SynMuvB proteins are required to repress the induction of vulval development by Ras signaling and probably act by forming the multiprotein DRM complex that repress transcription. The protein is Protein lin-54 of Caenorhabditis elegans.